We begin with the raw amino-acid sequence, 506 residues long: MEKKTLSLCPICLKRIPATILEEDGKIIIKKTCPEHGEFKDIYWGDAELYKKFDKYEFIGKIEVTNTKVKNGCPYDCGLCPNHKSTTILANIDVTNRCNLNCPICFANANKSGKVYEPSFEDIKRMMENLRKEIPPTPAIQFAGGEPTVRSDLPELIKLARDMGFLHVQLATNGIKLKNINYLKKLKEAGLSTIYLQFDGISEKPYLVARGKNLLPIKQKVIENCKKVGFDSVVLVPTLVRGVNDNEVGGIIRYAAENVDVVRGINFQPVSFTGRVDEKTLLEGRITIPDFIKLVEEQTDGEITEEDFYPVPSVAPISVLVEKLTNDRKPTLSSHQHCGTSTYVFVDEDGKLIPITRFIDVEGFLEIVKEKIEEIGKSKMHDVKVLGEIALKLPSLIDLDKAPKSVNIKKIIDLILSVLKSDYSALAELHYHMLMISCMHFMDAYNFDVKRVMRCCIHYATPDDRIIPFCTYNTLHRQEVEEKFSIPLEEWKRMHKIGGEDDREDY.

Residues Cys-73, Cys-77, Cys-80, Cys-98, Cys-102, and Cys-105 each coordinate [4Fe-4S] cluster. A Radical SAM core domain is found at Asn-82–Asp-300.

This sequence belongs to the radical SAM superfamily. It depends on [4Fe-4S] cluster as a cofactor. The cofactor is S-adenosyl-L-methionine.

The protein operates within cofactor biosynthesis; 5,6,7,8-tetrahydromethanopterin biosynthesis. Functionally, is responsible for the addition of methyl groups at C-7 and C-9 of the pterin ring during methanopterin (MPT) biosynthesis. Catalyzes methylation of 7,8-dihydro-6-hydroxymethylpterin, likely using methylenetetrahydromethanopterin as a methyl group donor, via a radical-based mechanism. The chain is 7,8-dihydro-6-hydroxymethylpterin dimethyltransferase from Methanocaldococcus jannaschii (strain ATCC 43067 / DSM 2661 / JAL-1 / JCM 10045 / NBRC 100440) (Methanococcus jannaschii).